Consider the following 140-residue polypeptide: uncharacterized protein (140 aa).

A coiled-coil region spans residues 27–65; that stretch reads LLGEVSELELQKICFNRSLRNEINQLEEQNDISFVRVER.

This is an uncharacterized protein from Pasteurella multocida (strain Pm70).